We begin with the raw amino-acid sequence, 594 residues long: Probable translation initiation factor IF-2 (594 aa).

The 218-residue stretch at 3–220 folds into the tr-type G domain; that stretch reads IRSPIVSVLG…MLMGLAQQYL (218 aa). The tract at residues 12 to 19 is G1; the sequence is GHVDHGKT. 12 to 19 serves as a coordination point for GTP; that stretch reads GHVDHGKT. A G2 region spans residues 37–41; that stretch reads GITQH. The interval 76–79 is G3; that stretch reads DTPG. Residues 76–80 and 130–133 each bind GTP; these read DTPGH and NKID. Positions 130-133 are G4; sequence NKID. A G5 region spans residues 198-200; sequence SAI.

It belongs to the TRAFAC class translation factor GTPase superfamily. Classic translation factor GTPase family. IF-2 subfamily.

Function in general translation initiation by promoting the binding of the formylmethionine-tRNA to ribosomes. Seems to function along with eIF-2. The chain is Probable translation initiation factor IF-2 (infB) from Methanothermobacter thermautotrophicus (strain ATCC 29096 / DSM 1053 / JCM 10044 / NBRC 100330 / Delta H) (Methanobacterium thermoautotrophicum).